Consider the following 295-residue polypeptide: Formamidopyrimidine-DNA glycosylase (295 aa).

Residue proline 2 is the Schiff-base intermediate with DNA of the active site. Catalysis depends on glutamate 3, which acts as the Proton donor. Lysine 61 serves as the catalytic Proton donor; for beta-elimination activity. The DNA site is built by histidine 95, arginine 117, and arginine 159. The FPG-type zinc finger occupies 245–279 (HAYGREGEACERCGTPIRRVAFMNRSSYFCPVCQP). Arginine 269 (proton donor; for delta-elimination activity) is an active-site residue.

This sequence belongs to the FPG family. In terms of assembly, monomer. Requires Zn(2+) as cofactor.

The enzyme catalyses Hydrolysis of DNA containing ring-opened 7-methylguanine residues, releasing 2,6-diamino-4-hydroxy-5-(N-methyl)formamidopyrimidine.. It carries out the reaction 2'-deoxyribonucleotide-(2'-deoxyribose 5'-phosphate)-2'-deoxyribonucleotide-DNA = a 3'-end 2'-deoxyribonucleotide-(2,3-dehydro-2,3-deoxyribose 5'-phosphate)-DNA + a 5'-end 5'-phospho-2'-deoxyribonucleoside-DNA + H(+). Its function is as follows. Involved in base excision repair of DNA damaged by oxidation or by mutagenic agents. Acts as a DNA glycosylase that recognizes and removes damaged bases. Has a preference for oxidized purines, such as 7,8-dihydro-8-oxoguanine (8-oxoG). Has AP (apurinic/apyrimidinic) lyase activity and introduces nicks in the DNA strand. Cleaves the DNA backbone by beta-delta elimination to generate a single-strand break at the site of the removed base with both 3'- and 5'-phosphates. The polypeptide is Formamidopyrimidine-DNA glycosylase (Nocardioides sp. (strain ATCC BAA-499 / JS614)).